Consider the following 242-residue polypeptide: Small ribosomal subunit protein uS2 (242 aa).

This sequence belongs to the universal ribosomal protein uS2 family.

In Neisseria meningitidis serogroup B (strain ATCC BAA-335 / MC58), this protein is Small ribosomal subunit protein uS2.